Here is a 206-residue protein sequence, read N- to C-terminus: Ribosomal RNA small subunit methyltransferase G (206 aa).

S-adenosyl-L-methionine-binding positions include glycine 74, leucine 79, 125 to 126 (VE), and arginine 140.

Belongs to the methyltransferase superfamily. RNA methyltransferase RsmG family.

The protein resides in the cytoplasm. The catalysed reaction is guanosine(527) in 16S rRNA + S-adenosyl-L-methionine = N(7)-methylguanosine(527) in 16S rRNA + S-adenosyl-L-homocysteine. In terms of biological role, specifically methylates the N7 position of guanine in position 527 of 16S rRNA. The sequence is that of Ribosomal RNA small subunit methyltransferase G from Shewanella putrefaciens (strain CN-32 / ATCC BAA-453).